The following is a 358-amino-acid chain: Methylthioribose-1-phosphate isomerase (358 aa).

Residues 54 to 56, Arg96, and Gln205 each bind substrate; that span reads RGA. The Proton donor role is filled by Asp246. Residue 256–257 participates in substrate binding; it reads NK.

This sequence belongs to the eIF-2B alpha/beta/delta subunits family. MtnA subfamily.

The catalysed reaction is 5-(methylsulfanyl)-alpha-D-ribose 1-phosphate = 5-(methylsulfanyl)-D-ribulose 1-phosphate. The protein operates within amino-acid biosynthesis; L-methionine biosynthesis via salvage pathway; L-methionine from S-methyl-5-thio-alpha-D-ribose 1-phosphate: step 1/6. In terms of biological role, catalyzes the interconversion of methylthioribose-1-phosphate (MTR-1-P) into methylthioribulose-1-phosphate (MTRu-1-P). This is Methylthioribose-1-phosphate isomerase from Pseudomonas syringae pv. syringae (strain B728a).